A 209-amino-acid polypeptide reads, in one-letter code: Nucleoside triphosphate pyrophosphatase (209 aa).

Residue aspartate 79 is the Proton acceptor of the active site.

Belongs to the Maf family. A divalent metal cation is required as a cofactor.

The protein resides in the cytoplasm. The enzyme catalyses a ribonucleoside 5'-triphosphate + H2O = a ribonucleoside 5'-phosphate + diphosphate + H(+). The catalysed reaction is a 2'-deoxyribonucleoside 5'-triphosphate + H2O = a 2'-deoxyribonucleoside 5'-phosphate + diphosphate + H(+). Nucleoside triphosphate pyrophosphatase. May have a dual role in cell division arrest and in preventing the incorporation of modified nucleotides into cellular nucleic acids. The polypeptide is Nucleoside triphosphate pyrophosphatase (Mycolicibacterium gilvum (strain PYR-GCK) (Mycobacterium gilvum (strain PYR-GCK))).